The following is a 372-amino-acid chain: Heat-inducible transcription repressor HrcA (372 aa).

Residues 300-334 (YGRSGAAGEPAGNDPVGEPETESETESQTNDTEPI) are disordered.

It belongs to the HrcA family.

Negative regulator of class I heat shock genes (grpE-dnaK-dnaJ and groELS operons). Prevents heat-shock induction of these operons. The chain is Heat-inducible transcription repressor HrcA from Bifidobacterium longum (strain DJO10A).